A 209-amino-acid polypeptide reads, in one-letter code: MDGVTVIGHPLVQHKLTIMRKKETSTAGFRRLLKEISTLLCYEVTRDLELTTERIETPLEETDAPVLEGKKLVFASILRAGNGLLEGMLELVPSARVAHIGVYRDHETLQAVEYFFKAPDNINERLVIVVDPMLATGNSSIAAVEKLKERGARNIRFLCLLAAPEGIRNFQGVHPDVPIFTASIDSHLNELGYIVPGLGDAGDRMYGTK.

Residues arginine 79, arginine 104, and 131 to 139 (DPMLATGNS) contribute to the 5-phospho-alpha-D-ribose 1-diphosphate site. Residues isoleucine 194 and 199 to 201 (GDA) each bind uracil. Residue aspartate 200 participates in 5-phospho-alpha-D-ribose 1-diphosphate binding.

Belongs to the UPRTase family. Mg(2+) is required as a cofactor.

It carries out the reaction UMP + diphosphate = 5-phospho-alpha-D-ribose 1-diphosphate + uracil. It participates in pyrimidine metabolism; UMP biosynthesis via salvage pathway; UMP from uracil: step 1/1. Allosterically activated by GTP. Functionally, catalyzes the conversion of uracil and 5-phospho-alpha-D-ribose 1-diphosphate (PRPP) to UMP and diphosphate. The polypeptide is Uracil phosphoribosyltransferase (Sinorhizobium medicae (strain WSM419) (Ensifer medicae)).